The primary structure comprises 407 residues: Dephospho-CoA kinase (407 aa).

One can recognise a DPCK domain in the interval 3–204 (RIGLTGGIGA…QPFAHNLAQR (202 aa)). 11–16 (GAGKSL) contributes to the ATP binding site. The interval 196–407 (PFAHNLAQRQ…EWADAVHWRP (212 aa)) is UPF0157.

It in the N-terminal section; belongs to the CoaE family. In the C-terminal section; belongs to the UPF0157 (GrpB) family.

It localises to the cytoplasm. It catalyses the reaction 3'-dephospho-CoA + ATP = ADP + CoA + H(+). It participates in cofactor biosynthesis; coenzyme A biosynthesis; CoA from (R)-pantothenate: step 5/5. Functionally, catalyzes the phosphorylation of the 3'-hydroxyl group of dephosphocoenzyme A to form coenzyme A. This Mycobacterium bovis (strain ATCC BAA-935 / AF2122/97) protein is Dephospho-CoA kinase.